The primary structure comprises 499 residues: Pleckstrin homology domain-containing family O member 2 (499 aa).

Positions 1-11 (MEEEGVKEGGQ) are enriched in basic and acidic residues. The segment at 1 to 21 (MEEEGVKEGGQRPRSAQTADK) is disordered. Residues 18–119 (TADKAGWIKK…WIKALNEGIN (102 aa)) form the PH domain. S167 carries the post-translational modification Phosphoserine. Residues 170–419 (LSRLDLDVPD…RRRQPGEQLH (250 aa)) are disordered. Residues 201–212 (RPPMPPAKPSPA) are compositionally biased toward pro residues. The span at 229–238 (SAPAPVPASS) shows a compositional bias: low complexity. Residues S237 and S238 each carry the phosphoserine modification. Acidic residues predominate over residues 246 to 258 (EDLETPVVEDSDS). S273 bears the Phosphoserine mark. Phosphothreonine is present on residues T298 and T311. Low complexity-rich tracts occupy residues 329-349 (EASGPAQSPGASEASAPGPAE) and 367-386 (AAGPPGTPPKAATTSTTLPP). Position 399 is a phosphoserine (S399). Residues 416–492 (EQLHRAQLEV…LREKRRELVT (77 aa)) are a coiled coil.

This is Pleckstrin homology domain-containing family O member 2 (PLEKHO2) from Bos taurus (Bovine).